The chain runs to 185 residues: NEDD8-conjugating enzyme UBE2F (185 aa).

Methionine 1 carries the N-acetylmethionine modification. An interaction with UBA3 region spans residues 1-29 (MLTLASKLKRDDGLKGSRTAATASDSTRR). Residues 32–185 (VRDKLLVKEV…VDDYIKRYAR (154 aa)) form the UBC core domain. Residue cysteine 116 is the Glycyl thioester intermediate of the active site.

The protein belongs to the ubiquitin-conjugating enzyme family. UBE2F subfamily. Interacts with UBA3 and RBX2. Interacts (N-terminally acetylated form) with (via DCUN1 domain) DCUN1D1, DCUN1D2, DCUN1D3, DCUN1D4 and DCUN1D5. The acetylation of Met-1 increases affinity for DCUN1D3 by about 2 orders of magnitude and is crucial for NEDD8 transfer to cullins. In terms of tissue distribution, widely expressed (at protein level).

It carries out the reaction [E1 NEDD8-activating enzyme]-S-[NEDD8 protein]-yl-L-cysteine + [E2 NEDD8-conjugating enzyme]-L-cysteine = [E1 NEDD8-activating enzyme]-L-cysteine + [E2 NEDD8-conjugating enzyme]-S-[NEDD8-protein]-yl-L-cysteine.. Its pathway is protein modification; protein neddylation. Its function is as follows. Accepts the ubiquitin-like protein NEDD8 from the UBA3-NAE1 E1 complex and catalyzes its covalent attachment to other proteins. Together with the E3 ubiquitin ligase RNF7/RBX2, specifically neddylates cullin-5 (CUL5). Does not neddylate CUL1, CUL2, CUL3, CUL4A or CUL4B. Mediates neddylation of the CUL9-RBX1 complex. Functionally, (Microbial infection) Following infection by HIV-1 virus, participates to HIV-1 Vif protein-mediated ubiquitination and degradation of APOBEC3G by mediating neddylation of cullin-5 (CUL5). The protein is NEDD8-conjugating enzyme UBE2F (UBE2F) of Homo sapiens (Human).